We begin with the raw amino-acid sequence, 118 residues long: Vesicle-associated membrane protein 1 (118 aa).

Positions 1–15 (MSAPAQPPAEGTEGA) are enriched in low complexity. The interval 1–38 (MSAPAQPPAEGTEGAAPGGGPPGPPPNTTSNRRLQQTQ) is disordered. Residues 1–96 (MSAPAQPPAE…KRKYWWKNCK (96 aa)) are Cytoplasmic-facing. The span at 28-38 (TTSNRRLQQTQ) shows a compositional bias: polar residues. The v-SNARE coiled-coil homology domain occupies 33–93 (RLQQTQAQVE…AKLKRKYWWK (61 aa)). Residue serine 63 is modified to Phosphoserine. Residues 97-116 (MMIMLGAICAIIVVVIVIYI) traverse the membrane as a helical; Anchor for type IV membrane protein segment. Residues 117–118 (FT) are Vesicular-facing.

Belongs to the synaptobrevin family. As to quaternary structure, interacts with VAPA and VAPB. In terms of processing, (Microbial infection) Targeted and hydrolyzed by C.botulinum neurotoxin type D (BoNT/D, botD) which hydrolyzes the 61-Lys-|-Leu-62 bond and inhibits neurotransmitter release. This is a poor substrate for BoNT/D, high concentrations are required to cleave it in vitro. Post-translationally, (Microbial infection) Targeted and hydrolyzed by C.botulinum neurotoxin type F (BoNT/F, botF) which hydrolyzes the 60-Gln-|-Lys-61 bond and inhibits neurotransmitter release. Expressed in brain and spleen (at protein level). Isoform 1 expressed at very high level in brain. Even higher level found in spinal cord. Isoform 3 expressed in kidney, spleen and liver. Isoforms 2 and 3 expressed in osteoblasts of trabecular bone. Also expressed in heart.

The protein localises to the cytoplasmic vesicle. It localises to the secretory vesicle. It is found in the synaptic vesicle membrane. The protein resides in the synapse. Its subcellular location is the synaptosome. The protein localises to the cytoplasmic vesicle membrane. It localises to the mitochondrion outer membrane. Functionally, involved in the targeting and/or fusion of transport vesicles to their target membrane. This chain is Vesicle-associated membrane protein 1 (Vamp1), found in Rattus norvegicus (Rat).